A 358-amino-acid polypeptide reads, in one-letter code: Serine/threonine-protein phosphatase 2A activator 2 (358 aa).

Interacts with the phosphatase PP2A catalytic subunits PPH21 and PPH22. Forms a ternary complex with PPH21-TAP42.

It localises to the cytoplasm. The enzyme catalyses [protein]-peptidylproline (omega=180) = [protein]-peptidylproline (omega=0). Functionally, PPIases accelerate the folding of proteins. It catalyzes the cis-trans isomerization of proline imidic peptide bonds in oligopeptides. Acts as a regulatory subunit for TAP42-associated PP2A-like phosphatases modulating their activity or substrate specificity, probably by inducing a conformational change in the catalytic subunit, a direct target of the PPIase. Can reactivate inactive phosphatase PP2A-phosphatase methylesterase complexes (PP2Ai) in presence of ATP and Mg(2+) by dissociating the inactive form from the complex. Acts also inhibitory at high concentrations. Involved in the regulation of cell cycle progression, mitotic spindle formation and bud morphogenesis. The chain is Serine/threonine-protein phosphatase 2A activator 2 (RRD2) from Saccharomyces cerevisiae (strain ATCC 204508 / S288c) (Baker's yeast).